The chain runs to 346 residues: Phosphate acyltransferase (346 aa).

It belongs to the PlsX family. In terms of assembly, homodimer. Probably interacts with PlsY.

It localises to the cytoplasm. The catalysed reaction is a fatty acyl-[ACP] + phosphate = an acyl phosphate + holo-[ACP]. It functions in the pathway lipid metabolism; phospholipid metabolism. Its function is as follows. Catalyzes the reversible formation of acyl-phosphate (acyl-PO(4)) from acyl-[acyl-carrier-protein] (acyl-ACP). This enzyme utilizes acyl-ACP as fatty acyl donor, but not acyl-CoA. The chain is Phosphate acyltransferase from Brucella melitensis biotype 2 (strain ATCC 23457).